Consider the following 316-residue polypeptide: Ornithine carbamoyltransferase (316 aa).

Carbamoyl phosphate contacts are provided by residues 57-60 (STRT), Q84, R108, and 135-138 (HPCQ). Residues N166, D230, and 234-235 (SM) each bind L-ornithine. Residues 269-270 (CL) and R297 contribute to the carbamoyl phosphate site.

The protein belongs to the aspartate/ornithine carbamoyltransferase superfamily. OTCase family.

It is found in the cytoplasm. It catalyses the reaction carbamoyl phosphate + L-ornithine = L-citrulline + phosphate + H(+). It functions in the pathway amino-acid biosynthesis; L-arginine biosynthesis; L-arginine from L-ornithine and carbamoyl phosphate: step 1/3. Its function is as follows. Reversibly catalyzes the transfer of the carbamoyl group from carbamoyl phosphate (CP) to the N(epsilon) atom of ornithine (ORN) to produce L-citrulline. This chain is Ornithine carbamoyltransferase, found in Bacillus thuringiensis subsp. konkukian (strain 97-27).